Here is a 438-residue protein sequence, read N- to C-terminus: ATP-dependent protease ATPase subunit HslU (438 aa).

Residues Ile18, 60–65 (GVGKTE), Asp251, Glu316, and Arg388 contribute to the ATP site.

This sequence belongs to the ClpX chaperone family. HslU subfamily. As to quaternary structure, a double ring-shaped homohexamer of HslV is capped on each side by a ring-shaped HslU homohexamer. The assembly of the HslU/HslV complex is dependent on binding of ATP.

The protein localises to the cytoplasm. Its function is as follows. ATPase subunit of a proteasome-like degradation complex; this subunit has chaperone activity. The binding of ATP and its subsequent hydrolysis by HslU are essential for unfolding of protein substrates subsequently hydrolyzed by HslV. HslU recognizes the N-terminal part of its protein substrates and unfolds these before they are guided to HslV for hydrolysis. The polypeptide is ATP-dependent protease ATPase subunit HslU (Jannaschia sp. (strain CCS1)).